The following is a 144-amino-acid chain: Large ribosomal subunit protein uL13 (144 aa).

The protein belongs to the universal ribosomal protein uL13 family. As to quaternary structure, part of the 50S ribosomal subunit.

Its function is as follows. This protein is one of the early assembly proteins of the 50S ribosomal subunit, although it is not seen to bind rRNA by itself. It is important during the early stages of 50S assembly. In Magnetococcus marinus (strain ATCC BAA-1437 / JCM 17883 / MC-1), this protein is Large ribosomal subunit protein uL13.